Consider the following 233-residue polypeptide: Small ribosomal subunit protein uS3 (233 aa).

The 69-residue stretch at 39–107 folds into the KH type-2 domain; that stretch reads VRQFLNKELE…PAQINIAEVR (69 aa).

The protein belongs to the universal ribosomal protein uS3 family. As to quaternary structure, part of the 30S ribosomal subunit. Forms a tight complex with proteins S10 and S14.

Its function is as follows. Binds the lower part of the 30S subunit head. Binds mRNA in the 70S ribosome, positioning it for translation. The sequence is that of Small ribosomal subunit protein uS3 from Edwardsiella ictaluri (strain 93-146).